Reading from the N-terminus, the 85-residue chain is Large ribosomal subunit protein bL27 (85 aa).

Residues 1–22 (MAHKKGVGSTRNGRDSESKRLG) form a disordered region.

The protein belongs to the bacterial ribosomal protein bL27 family.

The protein is Large ribosomal subunit protein bL27 of Geobacter metallireducens (strain ATCC 53774 / DSM 7210 / GS-15).